A 496-amino-acid chain; its full sequence is Probable zinc metalloprotease SNOG_06590 (496 aa).

Residues 1-20 (MRSSMFFAVCAAAALQTALS) form the signal peptide. N-linked (GlcNAc...) asparagine glycosylation is present at Asn138. Zn(2+) contacts are provided by His161, Asp181, and Glu226. Asn241 carries N-linked (GlcNAc...) asparagine glycosylation. Position 253 (Asp253) interacts with Zn(2+). Asn282, Asn361, Asn409, Asn415, and Asn457 each carry an N-linked (GlcNAc...) asparagine glycan. A Fibronectin type-III domain is found at 402-496 (EPMNVGINTT…PFPFGCTRNC (95 aa)).

The protein belongs to the peptidase M28 family. M28B subfamily. It depends on Zn(2+) as a cofactor.

It is found in the secreted. This Phaeosphaeria nodorum (strain SN15 / ATCC MYA-4574 / FGSC 10173) (Glume blotch fungus) protein is Probable zinc metalloprotease SNOG_06590.